A 190-amino-acid chain; its full sequence is Ribosome hibernation promotion factor (190 aa).

Belongs to the HPF/YfiA ribosome-associated protein family. Long HPF subfamily. As to quaternary structure, interacts with 100S ribosomes.

The protein localises to the cytoplasm. Required for dimerization of active 70S ribosomes into 100S ribosomes in stationary phase; 100S ribosomes are translationally inactive and sometimes present during exponential growth. The sequence is that of Ribosome hibernation promotion factor from Staphylococcus saprophyticus subsp. saprophyticus (strain ATCC 15305 / DSM 20229 / NCIMB 8711 / NCTC 7292 / S-41).